Reading from the N-terminus, the 1323-residue chain is MPENTAIASIFTAIVCFKFIILTLEAKEKSNLIRPEFKHPSPEQAAGILNRSFFWWFNPLLLTGSKQRLAVDDLFFNDDGLTFDAWRDIITRRWAKADISKPHALLKVMLATFKGLLLAGILPRLCLTGPETTTSNKVAYGLIAAYAIVYIGIAVMSTMSQHKNYRTIVAIRGSAVSLIYQHTLRLTSSSTSTSSSLTLINNDVERMGHGMREVHEIWASLIEIALSLWLLEVRLGVSVVAAVFVIIGNICTLLGCVFGFVKMGLLLGDRQKVWLEAIEKRTSSTIATLGSIRGIKSTGATDIVQRITTRLRLDEIRISLKYRELLVGIVTLSYVSTTMAPVFAFATYSIISNSRGTTPLLAASAYTSLTIFSLLGQAVSKWISSSVDIITTIACLERVRQYLATNLRVDPRTIESYIKPIDSSNSPRLRNSDISQTEMLDMGSVDQSQYHPNSVGEVLREVPLAKMMITIRDCSACWSKGSEMAISEINLTILKGSLAMVIGPIGSGKSTLLKVILGEMPHTTGTVIVGRSEAAFCGQSPWLTNVSVRNNIIGVSYLDANWYNTVVNACALDRDFEQLPDGDNTVIGSKGVLLSGGQKSRLALARALYARNDLVILDDVFSGLDAKTEQRVFESVLGSHGILRQGGTTTVLATNSVRNISLADHIVVMGSDGKITDQGTYQNLVFASSYLESLGTRQKTLNISDSEKSKDDTVSGLAVASAMHQPVDSDNRGDKDLTIYKYYIDTVGWVTWWVFVLLCSGFVFGLVFPQIWIQFWTEANARQANYRLAYYLSLYALWPLMAIVIFLGACAWLMIRMVSKAAIQFHGILLNSALSAPLVYFSTTDSGEVSNRFTQDLNLIDMELPTALIGTTVTFLSCIAQIGVIIYGSSYVAAAIPALIVFLYYIQLFYLRTSRQLRLLELEAKAPLLSHFMESIHGLVTIRAFGWTEKFTHQNHDLLERSQRPFYLLYCAQRWLNLTLELAVAFLAIILVSIALTTRESSGAKIGVALLSIVGFGLNLKTLVYTWTSLEIAMGAVSRIRHFAINTSSEDLPGEDRTLPPDWPHEGVIRFQSVSAAYSPTSHPVLNDLSFTVKAGTKVAICGRTGSGKSSTLAALLRLIDLRSGAITIDGIDISTVVRQDLRSKLITLPQEPFYYHASIRDNLDVRGQFSTEELLDILEVVGMREVIDKKGGLDAMANADVLSHGQSQLLCLARAILRPNKILILDEATSSVDKKTEEKMVDIIREKFQDRTVISVAHNLNTIMDYDEVIVLEAGRIIEQGKPLALALEPSFFASLLKAADGESEDALEEETISNIASPRSR.

The next 7 helical transmembrane spans lie at A6–A26, P102–L122, V138–T158, I217–V237, V240–F260, L325–F345, and P359–V379. One can recognise an ABC transmembrane type-1 1 domain in the interval L142–S380. The ABC transporter 1 domain maps to I471–R697. An ATP-binding site is contributed by G503–S510. Helical transmembrane passes span G748–F768, Y795–I815, A821–F841, L859–I879, Y891–Y910, L976–L996, and I1006–T1026. In terms of domain architecture, ABC transmembrane type-1 2 spans W752–E1031. The ABC transporter 2 domain occupies I1069–A1300. Residue G1103–S1110 participates in ATP binding.

This sequence belongs to the ABC transporter superfamily. ABCC family. Conjugate transporter (TC 3.A.1.208) subfamily.

The protein resides in the cell membrane. In terms of biological role, 3-isopropylmalate dehydratase large subunit; part of the gene cluster that mediates the biosynthesis of pneumocandins, lipohexapeptides of the echinocandin family that prevent fungal cell wall formation by non-competitive inhibition of beta-1,3-glucan synthase. Possibly secretes antifungal pneumocandins, thus avoiding of intracellular accumulation and ameliorating the toxicity to the producing cells. This chain is ABC transporter gloK, found in Glarea lozoyensis (strain ATCC 20868 / MF5171).